The following is a 154-amino-acid chain: Deoxyuridine 5'-triphosphate nucleotidohydrolase (154 aa).

Substrate is bound by residues 70 to 72 (RSG), Asn83, 87 to 89 (LID), and Met97.

The protein belongs to the dUTPase family. Mg(2+) serves as cofactor.

The catalysed reaction is dUTP + H2O = dUMP + diphosphate + H(+). It participates in pyrimidine metabolism; dUMP biosynthesis; dUMP from dCTP (dUTP route): step 2/2. Functionally, this enzyme is involved in nucleotide metabolism: it produces dUMP, the immediate precursor of thymidine nucleotides and it decreases the intracellular concentration of dUTP so that uracil cannot be incorporated into DNA. In Buchnera aphidicola subsp. Acyrthosiphon pisum (strain 5A), this protein is Deoxyuridine 5'-triphosphate nucleotidohydrolase.